The chain runs to 631 residues: Phosphomethylpyrimidine synthase (631 aa).

Substrate-binding positions include Asn-239, Met-268, Tyr-297, His-333, Ser-353–Gly-355, Asp-394–Arg-397, and Glu-433. Zn(2+) is bound at residue His-437. Position 460 (Tyr-460) interacts with substrate. His-501 serves as a coordination point for Zn(2+). 3 residues coordinate [4Fe-4S] cluster: Cys-581, Cys-584, and Cys-589.

It belongs to the ThiC family. In terms of assembly, homodimer. Requires [4Fe-4S] cluster as cofactor.

It carries out the reaction 5-amino-1-(5-phospho-beta-D-ribosyl)imidazole + S-adenosyl-L-methionine = 4-amino-2-methyl-5-(phosphooxymethyl)pyrimidine + CO + 5'-deoxyadenosine + formate + L-methionine + 3 H(+). It functions in the pathway cofactor biosynthesis; thiamine diphosphate biosynthesis. Its function is as follows. Catalyzes the synthesis of the hydroxymethylpyrimidine phosphate (HMP-P) moiety of thiamine from aminoimidazole ribotide (AIR) in a radical S-adenosyl-L-methionine (SAM)-dependent reaction. The polypeptide is Phosphomethylpyrimidine synthase (Escherichia coli (strain SMS-3-5 / SECEC)).